A 252-amino-acid chain; its full sequence is Imidazole glycerol phosphate synthase subunit HisF (252 aa).

Catalysis depends on residues aspartate 11 and aspartate 130.

Belongs to the HisA/HisF family. In terms of assembly, heterodimer of HisH and HisF.

Its subcellular location is the cytoplasm. The catalysed reaction is 5-[(5-phospho-1-deoxy-D-ribulos-1-ylimino)methylamino]-1-(5-phospho-beta-D-ribosyl)imidazole-4-carboxamide + L-glutamine = D-erythro-1-(imidazol-4-yl)glycerol 3-phosphate + 5-amino-1-(5-phospho-beta-D-ribosyl)imidazole-4-carboxamide + L-glutamate + H(+). It participates in amino-acid biosynthesis; L-histidine biosynthesis; L-histidine from 5-phospho-alpha-D-ribose 1-diphosphate: step 5/9. Its function is as follows. IGPS catalyzes the conversion of PRFAR and glutamine to IGP, AICAR and glutamate. The HisF subunit catalyzes the cyclization activity that produces IGP and AICAR from PRFAR using the ammonia provided by the HisH subunit. In Thermococcus kodakarensis (strain ATCC BAA-918 / JCM 12380 / KOD1) (Pyrococcus kodakaraensis (strain KOD1)), this protein is Imidazole glycerol phosphate synthase subunit HisF.